The sequence spans 536 residues: Probable cytochrome P450 12a5, mitochondrial (536 aa).

Residue Cys-482 coordinates heme.

Belongs to the cytochrome P450 family. Requires heme as cofactor.

The protein localises to the mitochondrion membrane. The polypeptide is Probable cytochrome P450 12a5, mitochondrial (Cyp12a5) (Drosophila melanogaster (Fruit fly)).